Consider the following 423-residue polypeptide: Endoplasmic reticulum junction formation protein lunapark (423 aa).

Over 1–45 (MGALLAKWRAKPSTVEVLEKMEKDIQSLEEFRDKNQKLRKIWVAR) the chain is Cytoplasmic. A coiled-coil region spans residues 16–40 (EVLEKMEKDIQSLEEFRDKNQKLRK). Residues 46–66 (LFFYSTILYILTSLTVYLWYL) form a helical membrane-spanning segment. The Lumenal segment spans residues 67-77 (PDGMTARLLTM). The chain crosses the membrane as a helical span at residues 78 to 98 (LLFLSFPVLIWFVRTLLILWF). The Cytoplasmic portion of the chain corresponds to 99-423 (SRRTERNNDA…ETEESFMETE (325 aa)). Residues 101 to 128 (RTERNNDALELLKTEKKKILEEVMEKET) are a coiled coil. Residues 147-169 (KELELPVPGPPITPRPGQDLRQR) are disordered. Thr159 carries the phosphothreonine modification. Residues Ser177, Ser179, and Ser188 each carry the phosphoserine modification. Thr198 is modified (phosphothreonine). Residues 200 to 247 (SLQRDTSAPGGPPERSVQPTPQSNILQRRPGSPATTVSGMAIHPPGPP) form a disordered region. 2 positions are modified to phosphoserine: Ser206 and Ser215. The segment covering 216–225 (VQPTPQSNIL) has biased composition (polar residues). Thr219 bears the Phosphothreonine mark. A phosphoserine mark is found at Ser222 and Ser231. The segment at 280 to 305 (CQQCFSHNGMALKEEFEYVAFRCAYC) adopts a C4-type; plays a role in ER morphology zinc-finger fold. The disordered stretch occupies residues 318-423 (APRLQEINFD…ETEESFMETE (106 aa)). A compositionally biased stretch (polar residues) spans 334–343 (DSQGSVSSVQ). Composition is skewed to acidic residues over residues 370–391 (QAIE…DDSE) and 414–423 (ETEESFMETE).

The protein belongs to the lunapark family. Homodimer; homodimerization requires the C4-type zinc finger motif and decreases during mitosis in a phosphorylation-dependent manner. In terms of processing, phosphorylated. Phosphorylation at Thr-159 occurs during interphase. Phosphorylation at Ser-177, Ser-179, Ser-188, Thr-198, Ser-206, Ser-215, Thr-219, Ser-222 and Ser-231 occurs during mitosis; these phosphorylations reduce both its homodimerization and the ER three-way tubular junction formation.

The protein resides in the endoplasmic reticulum membrane. Endoplasmic reticulum (ER)-shaping membrane protein that plays a role in determining ER morphology. Involved in the stabilization of nascent three-way ER tubular junctions within the ER network. May also play a role as a curvature-stabilizing protein within three-way ER tubular junction network. The protein is Endoplasmic reticulum junction formation protein lunapark (lnpk) of Xenopus tropicalis (Western clawed frog).